The primary structure comprises 109 residues: ATP synthase subunit c (109 aa).

The next 2 membrane-spanning stretches (helical) occupy residues Y42–S62 and L88–V108.

Belongs to the ATPase C chain family. F-type ATPases have 2 components, F(1) - the catalytic core - and F(0) - the membrane proton channel. F(1) has five subunits: alpha(3), beta(3), gamma(1), delta(1), epsilon(1). F(0) has three main subunits: a(1), b(2) and c(10-14). The alpha and beta chains form an alternating ring which encloses part of the gamma chain. F(1) is attached to F(0) by a central stalk formed by the gamma and epsilon chains, while a peripheral stalk is formed by the delta and b chains.

The protein localises to the cell membrane. F(1)F(0) ATP synthase produces ATP from ADP in the presence of a proton or sodium gradient. F-type ATPases consist of two structural domains, F(1) containing the extramembraneous catalytic core and F(0) containing the membrane proton channel, linked together by a central stalk and a peripheral stalk. During catalysis, ATP synthesis in the catalytic domain of F(1) is coupled via a rotary mechanism of the central stalk subunits to proton translocation. Functionally, key component of the F(0) channel; it plays a direct role in translocation across the membrane. A homomeric c-ring of between 10-14 subunits forms the central stalk rotor element with the F(1) delta and epsilon subunits. This chain is ATP synthase subunit c, found in Ureaplasma parvum serovar 3 (strain ATCC 27815 / 27 / NCTC 11736).